A 237-amino-acid chain; its full sequence is Protein GrpE (237 aa).

Disordered stretches follow at residues 27–51 and 202–237; these read EDRE…LSET and AVSS…PQHS. Composition is skewed to low complexity over residues 33–45 and 204–213; these read ASTS…AEAS and SSGSPTSEPS. Over residues 227-237 the composition is skewed to polar residues; it reads TPASPQNPQHS.

The protein belongs to the GrpE family. In terms of assembly, homodimer.

It is found in the cytoplasm. Its function is as follows. Participates actively in the response to hyperosmotic and heat shock by preventing the aggregation of stress-denatured proteins, in association with DnaK and GrpE. It is the nucleotide exchange factor for DnaK and may function as a thermosensor. Unfolded proteins bind initially to DnaJ; upon interaction with the DnaJ-bound protein, DnaK hydrolyzes its bound ATP, resulting in the formation of a stable complex. GrpE releases ADP from DnaK; ATP binding to DnaK triggers the release of the substrate protein, thus completing the reaction cycle. Several rounds of ATP-dependent interactions between DnaJ, DnaK and GrpE are required for fully efficient folding. The chain is Protein GrpE from Synechococcus sp. (strain JA-3-3Ab) (Cyanobacteria bacterium Yellowstone A-Prime).